We begin with the raw amino-acid sequence, 472 residues long: Riboflavin transporter RibJ (472 aa).

The Cytoplasmic portion of the chain corresponds to 1-11 (MLPCFTRKPVD). A helical transmembrane segment spans residues 12–32 (HPLGFLVALSGLLMQLMSYGI). Residues 33 to 58 (DNSYSIFSDDMHKDPSLGYPSVTTIS) are Extracellular-facing. A helical membrane pass occupies residues 59-79 (LGNSVSLGLSPAFGVLCGFLV). The Cytoplasmic portion of the chain corresponds to 80 to 85 (DRVPPR). A helical membrane pass occupies residues 86 to 106 (LMMAVSTLMLFAGLWLSSTFA). Residues 107-108 (HN) lie on the Extracellular side of the membrane. The N-linked (GlcNAc...) asparagine glycan is linked to Asn108. A helical membrane pass occupies residues 109–129 (VTAVTFSYCLLASISSACMLS). Over 130-144 (PGAAATSSWFNRYQG) the chain is Cytoplasmic. A helical transmembrane segment spans residues 145-165 (LAMGINFSGGGVGSAIIPSLA). Residues 166 to 179 (GKWVVAYGWRKTFR) lie on the Extracellular side of the membrane. Residues 180 to 196 (LMSAFCAIGVVATLLSA) form a helical membrane-spanning segment. At 197 to 271 (RRAPPKKEEA…TMFSRAFLGN (75 aa)) the chain is on the cytoplasmic side. A disordered region spans residues 200–248 (PPKKEEAGPSEYDEGQERQEQGEEEQAHTDEENRNNNNSNGETTPARRG). Residues 214–233 (GQERQEQGEEEQAHTDEENR) show a composition bias toward basic and acidic residues. The helical transmembrane segment at 272 to 292 (FFCWLIFSWAFYSLIYVAVPY) threads the bilayer. The Extracellular segment spans residues 293–315 (VSSMGKAGTVYADISPIPTDIAS). Residues 316–336 (TLFTFYGVFQIVGSILVGWLA) traverse the membrane as a helical segment. The Cytoplasmic segment spans residues 337-341 (TGTTN). A helical transmembrane segment spans residues 342-362 (EFAYVLCATIGGIFCAFLGFC). Over 363 to 365 (RSY) the chain is Extracellular. A helical membrane pass occupies residues 366–386 (VAFALLLCVIGFCMAGMFAVM). The Cytoplasmic portion of the chain corresponds to 387–399 (PALIAERLYGPNL). The helical transmembrane segment at 400 to 420 (GFYMGAVFLAGVVGGFSAPPI) threads the bilayer. Residues 421-434 (QAELQQRHYGNYTY) are Extracellular-facing. Asn431 carries N-linked (GlcNAc...) asparagine glycosylation. A helical transmembrane segment spans residues 435–455 (VCVFMSACMTLAAAVCYITMW). The Cytoplasmic segment spans residues 456–472 (RDKRVRIVSAAAEAKLA).

The protein belongs to the major facilitator superfamily. RibJ family.

The protein resides in the cell membrane. Its function is as follows. Transporter involved in riboflavin (vitamin B2) uptake. Also transports FMN and FAD. In Trypanosoma cruzi (strain CL Brener), this protein is Riboflavin transporter RibJ.